The chain runs to 645 residues: Cysteine-rich receptor-like protein kinase 10 (645 aa).

Residues 1 to 27 (MSMACYYLAAAAAGLALLLLHAPLTDA) form the signal peptide. 2 Gnk2-homologous domains span residues 28 to 132 (QTLV…NDAF) and 140 to 251 (SQGM…VYPF). The Extracellular portion of the chain corresponds to 28 to 283 (QTLVPLCGDS…AGERSKNKRS (256 aa)). Residues Asn-39 and Asn-91 are each glycosylated (N-linked (GlcNAc...) asparagine). 2 cysteine pairs are disulfide-bonded: Cys-86–Cys-95 and Cys-98–Cys-123. N-linked (GlcNAc...) asparagine glycans are attached at residues Asn-151 and Asn-169. 2 disulfide bridges follow: Cys-204–Cys-213 and Cys-216–Cys-242. Residues 284–304 (AILAISMPTIALVLATIAAWF) traverse the membrane as a helical segment. The Cytoplasmic segment spans residues 305–645 (CSTSWRRRRL…WVQEIGATAS (341 aa)). The region spanning 348 to 619 (FSEHKRLGEG…PLMSAVNAML (272 aa)) is the Protein kinase domain. ATP is bound by residues 354–362 (LGEGGFGVV) and Lys-376. Asp-473 serves as the catalytic Proton acceptor.

This sequence belongs to the protein kinase superfamily. Ser/Thr protein kinase family. CRK subfamily.

The protein localises to the membrane. In terms of biological role, involved in disease resistance. Required for NPR1/NH1-mediated immunity to the bacterial blight pathogen Xanthomomas oryzae pv. oryzae (Xoo). Required for the benzothiadiazole (BTH)-induced immune response. Probably regulated by the transcription factor TGA2.1. The protein is Cysteine-rich receptor-like protein kinase 10 of Oryza sativa subsp. japonica (Rice).